A 232-amino-acid polypeptide reads, in one-letter code: Sugar fermentation stimulation protein homolog (232 aa).

The protein belongs to the SfsA family.

This is Sugar fermentation stimulation protein homolog from Magnetococcus marinus (strain ATCC BAA-1437 / JCM 17883 / MC-1).